The chain runs to 187 residues: Dihydrofolate reductase (187 aa).

Residues 4–185 (PLNCIVAVSQ…IKYKFEVYEK (182 aa)) form the DHFR domain. The involved in methotrexate binding stretch occupies residues 8–37 (IVAVSQNMGIGKNGDFPWPMLRNEFKYFQR). Residues alanine 10 and 16–22 (GIGKNGD) each bind NADP(+). Residue 31-36 (EFKYFQ) coordinates substrate. The residue at position 33 (lysine 33) is an N6-acetyllysine; alternate. At lysine 33 the chain carries N6-succinyllysine; alternate. 55–57 (RKT) lines the NADP(+) pocket. The segment at 60–70 (SIPEKNRPLKD) is involved in methotrexate binding. Arginine 71 serves as a coordination point for substrate. NADP(+) contacts are provided by residues 77–79 (SRE) and 117–124 (GGSSVYKE). Threonine 137 contacts methotrexate.

The protein belongs to the dihydrofolate reductase family. As to quaternary structure, homodimer.

The protein resides in the mitochondrion. It is found in the cytoplasm. The catalysed reaction is (6S)-5,6,7,8-tetrahydrofolate + NADP(+) = 7,8-dihydrofolate + NADPH + H(+). Its pathway is cofactor biosynthesis; tetrahydrofolate biosynthesis; 5,6,7,8-tetrahydrofolate from 7,8-dihydrofolate: step 1/1. In terms of biological role, key enzyme in folate metabolism. Contributes to the de novo mitochondrial thymidylate biosynthesis pathway. Catalyzes an essential reaction for de novo glycine and purine synthesis, and for DNA precursor synthesis. Binds its own mRNA. In Mesocricetus auratus (Golden hamster), this protein is Dihydrofolate reductase (DHFR).